The sequence spans 431 residues: Glutamate-1-semialdehyde 2,1-aminomutase (431 aa).

Lysine 265 bears the N6-(pyridoxal phosphate)lysine mark.

It belongs to the class-III pyridoxal-phosphate-dependent aminotransferase family. HemL subfamily. As to quaternary structure, homodimer. Pyridoxal 5'-phosphate is required as a cofactor.

It localises to the cytoplasm. It catalyses the reaction (S)-4-amino-5-oxopentanoate = 5-aminolevulinate. It participates in porphyrin-containing compound metabolism; protoporphyrin-IX biosynthesis; 5-aminolevulinate from L-glutamyl-tRNA(Glu): step 2/2. This Pseudoalteromonas atlantica (strain T6c / ATCC BAA-1087) protein is Glutamate-1-semialdehyde 2,1-aminomutase.